Reading from the N-terminus, the 185-residue chain is MWKNGAMRGCNKETGEFLGPSRSQQRRTALEVLVLSEKLAALTPAQLAKLPIPERLLPHITETKRITSHIARKRQLAFLAKQMRREDDTTLETIREKLDASGIQAQREVATLHRTEQWRKRLLEEGDSALTELLNQYPQADCGKLRQLLRNTKTEQARNKPPQAFRELYQVLHGLIITQNSDNQH.

Positions 1–22 (MWKNGAMRGCNKETGEFLGPSR) are disordered.

Belongs to the DarP family.

It is found in the cytoplasm. Functionally, member of a network of 50S ribosomal subunit biogenesis factors which assembles along the 30S-50S interface, preventing incorrect 23S rRNA structures from forming. Promotes peptidyl transferase center (PTC) maturation. The polypeptide is Dual-action ribosomal maturation protein DarP (Xylella fastidiosa (strain 9a5c)).